Reading from the N-terminus, the 174-residue chain is Tat proofreading chaperone TtrD (174 aa).

The protein belongs to the TorD/DmsD family. As to quaternary structure, monomer.

It is found in the cytoplasm. In terms of biological role, binds specifically to the Tat signal peptide of the TtrA subunit of the tetrathionate reductase. The chain is Tat proofreading chaperone TtrD (ttrD) from Archaeoglobus fulgidus (strain ATCC 49558 / DSM 4304 / JCM 9628 / NBRC 100126 / VC-16).